We begin with the raw amino-acid sequence, 121 residues long: Ribosome-binding factor A (121 aa).

It belongs to the RbfA family. As to quaternary structure, monomer. Binds 30S ribosomal subunits, but not 50S ribosomal subunits or 70S ribosomes.

Its subcellular location is the cytoplasm. One of several proteins that assist in the late maturation steps of the functional core of the 30S ribosomal subunit. Associates with free 30S ribosomal subunits (but not with 30S subunits that are part of 70S ribosomes or polysomes). Required for efficient processing of 16S rRNA. May interact with the 5'-terminal helix region of 16S rRNA. In Hydrogenovibrio crunogenus (strain DSM 25203 / XCL-2) (Thiomicrospira crunogena), this protein is Ribosome-binding factor A.